The sequence spans 148 residues: Succinate dehydrogenase assembly factor 3, mitochondrial (148 aa).

A mitochondrion-targeting transit peptide spans 1 to 12 (MYALRPTLRRSA). Residues 129–148 (RGTEGDLEDGDGGESGQKSQ) form a disordered region.

It belongs to the complex I LYR family. SDHAF3 subfamily. In terms of assembly, interacts with the iron-sulfur protein subunit within the SDH catalytic dimer.

The protein localises to the mitochondrion matrix. Functionally, plays an essential role in the assembly of succinate dehydrogenase (SDH), an enzyme complex (also referred to as respiratory complex II) that is a component of both the tricarboxylic acid (TCA) cycle and the mitochondrial electron transport chain, and which couples the oxidation of succinate to fumarate with the reduction of ubiquinone (coenzyme Q) to ubiquinol. Promotes maturation of the iron-sulfur protein subunit of the SDH catalytic dimer, protecting it from the deleterious effects of oxidants. May act together with SDHAF1. The sequence is that of Succinate dehydrogenase assembly factor 3, mitochondrial from Neurospora crassa (strain ATCC 24698 / 74-OR23-1A / CBS 708.71 / DSM 1257 / FGSC 987).